The sequence spans 303 residues: Taste receptor type 2 member 13 (303 aa).

Topologically, residues 1-7 (MESALPS) are extracellular. The chain crosses the membrane as a helical span at residues 8-28 (IFTLVIIAEFIIGNLSNGFIV). The Cytoplasmic segment spans residues 29–55 (LINCIDWVSKRELSSVDKLLIILAISR). A helical membrane pass occupies residues 56 to 76 (IGLIWEILVSWFLALHSLAIF). Over 77 to 85 (VSGTGLRIM) the chain is Extracellular. Residues 86-106 (IFSWIVSNHFNLWLATILSIF) traverse the membrane as a helical segment. The Cytoplasmic portion of the chain corresponds to 107 to 128 (YLLKIASFSSPAFLYLKRRVNK). Residues 129 to 149 (VILMILLGTLVFLFLNLIQIN) form a helical membrane-spanning segment. Over 150–184 (MLIKDWLDRYERNTTWNFSMSDFETFSVSVRFTMT) the chain is Extracellular. Asn-162 and Asn-166 each carry an N-linked (GlcNAc...) asparagine glycan. Residues 185–205 (MFSLTPFTVAFISFLLLVFSL) form a helical membrane-spanning segment. Over 206–232 (QKHLQKMQLNYKGHRDPRTKVHTNALK) the chain is Cytoplasmic. A helical transmembrane segment spans residues 233-253 (IVISFLLFYASFFLSILISWI). Topologically, residues 254-261 (SELYQNTV) are extracellular. The chain crosses the membrane as a helical span at residues 262–282 (IYMLCETIGAFYPSSHSFLLI). At 283–303 (LGNAKLRQAFLLVAAKVWAKR) the chain is on the cytoplasmic side.

The protein belongs to the G-protein coupled receptor T2R family.

The protein localises to the membrane. Functionally, receptor that may play a role in the perception of bitterness and is gustducin-linked. May play a role in sensing the chemical composition of the gastrointestinal content. The activity of this receptor may stimulate alpha gustducin, mediate PLC-beta-2 activation and lead to the gating of TRPM5. In Pan paniscus (Pygmy chimpanzee), this protein is Taste receptor type 2 member 13 (TAS2R13).